We begin with the raw amino-acid sequence, 345 residues long: NADH-ubiquinone oxidoreductase chain 2 (345 aa).

A run of 9 helical transmembrane segments spans residues Met1–Met21, Phe60–Leu80, Pro110–Ile130, Ile149–Gly169, Met179–Ile196, Leu200–Thr222, Thr240–Phe260, Asn274–Leu294, and Thr323–Met343.

Belongs to the complex I subunit 2 family.

The protein localises to the mitochondrion inner membrane. The enzyme catalyses a ubiquinone + NADH + 5 H(+)(in) = a ubiquinol + NAD(+) + 4 H(+)(out). In terms of biological role, core subunit of the mitochondrial membrane respiratory chain NADH dehydrogenase (Complex I) that is believed to belong to the minimal assembly required for catalysis. Complex I functions in the transfer of electrons from NADH to the respiratory chain. The immediate electron acceptor for the enzyme is believed to be ubiquinone. The chain is NADH-ubiquinone oxidoreductase chain 2 (MT-ND2) from Varanus melinus (Quince monitor lizard).